A 103-amino-acid polypeptide reads, in one-letter code: Cell division topological specificity factor (103 aa).

The protein belongs to the MinE family.

Prevents the cell division inhibition by proteins MinC and MinD at internal division sites while permitting inhibition at polar sites. This ensures cell division at the proper site by restricting the formation of a division septum at the midpoint of the long axis of the cell. This Prochlorococcus marinus (strain MIT 9211) protein is Cell division topological specificity factor.